The following is a 474-amino-acid chain: Glutamate--tRNA ligase (474 aa).

The short motif at 11 to 21 (PSPTGFLHIGG) is the 'HIGH' region element. A 'KMSKS' region motif is present at residues 240-244 (KLSKR). Residue K243 participates in ATP binding.

Belongs to the class-I aminoacyl-tRNA synthetase family. Glutamate--tRNA ligase type 1 subfamily. Monomer.

It is found in the cytoplasm. It catalyses the reaction tRNA(Glu) + L-glutamate + ATP = L-glutamyl-tRNA(Glu) + AMP + diphosphate. Catalyzes the attachment of glutamate to tRNA(Glu) in a two-step reaction: glutamate is first activated by ATP to form Glu-AMP and then transferred to the acceptor end of tRNA(Glu). The chain is Glutamate--tRNA ligase from Nitrobacter winogradskyi (strain ATCC 25391 / DSM 10237 / CIP 104748 / NCIMB 11846 / Nb-255).